We begin with the raw amino-acid sequence, 222 residues long: N-(5'-phosphoribosyl)anthranilate isomerase (222 aa).

It belongs to the TrpF family.

It carries out the reaction N-(5-phospho-beta-D-ribosyl)anthranilate = 1-(2-carboxyphenylamino)-1-deoxy-D-ribulose 5-phosphate. The protein operates within amino-acid biosynthesis; L-tryptophan biosynthesis; L-tryptophan from chorismate: step 3/5. This Brevibacillus brevis (strain 47 / JCM 6285 / NBRC 100599) protein is N-(5'-phosphoribosyl)anthranilate isomerase.